A 137-amino-acid polypeptide reads, in one-letter code: Small ribosomal subunit protein bS16 (137 aa).

Over residues 104 to 118 the composition is skewed to basic and acidic residues; it reads ADEKKKPVLKPKTEK. The disordered stretch occupies residues 104–137; sequence ADEKKKPVLKPKTEKAAPAPEAAAPEAESTEEQA. A compositionally biased stretch (low complexity) spans 119–130; it reads AAPAPEAAAPEA.

It belongs to the bacterial ribosomal protein bS16 family.

The sequence is that of Small ribosomal subunit protein bS16 from Clavibacter michiganensis subsp. michiganensis (strain NCPPB 382).